Reading from the N-terminus, the 447-residue chain is Methylenetetrahydrofolate--tRNA-(uracil-5-)-methyltransferase TrmFO (447 aa).

An FAD-binding site is contributed by 8-13 (GGGLAG). The segment at 398–421 (NWGLVPAPPKRENGRRLGRQERRR) is disordered. Over residues 406–417 (PKRENGRRLGRQ) the composition is skewed to basic and acidic residues.

This sequence belongs to the MnmG family. TrmFO subfamily. FAD is required as a cofactor.

It localises to the cytoplasm. The catalysed reaction is uridine(54) in tRNA + (6R)-5,10-methylene-5,6,7,8-tetrahydrofolate + NADH + H(+) = 5-methyluridine(54) in tRNA + (6S)-5,6,7,8-tetrahydrofolate + NAD(+). It catalyses the reaction uridine(54) in tRNA + (6R)-5,10-methylene-5,6,7,8-tetrahydrofolate + NADPH + H(+) = 5-methyluridine(54) in tRNA + (6S)-5,6,7,8-tetrahydrofolate + NADP(+). Its function is as follows. Catalyzes the folate-dependent formation of 5-methyl-uridine at position 54 (M-5-U54) in all tRNAs. In Rubrobacter xylanophilus (strain DSM 9941 / JCM 11954 / NBRC 16129 / PRD-1), this protein is Methylenetetrahydrofolate--tRNA-(uracil-5-)-methyltransferase TrmFO.